The following is a 622-amino-acid chain: Palmitoyltransferase ZDHHC13 (622 aa).

At Met1 the chain carries N-acetylmethionine. Residues 1–291 are Cytoplasmic-facing; it reads MEGPGLGSQC…RLWRWLHKCE (291 aa). ANK repeat units follow at residues 43–78, 81–110, 115–144, 148–177, 181–211, 216–245, and 249–277; these read PLIE…VRQP, ENVS…VIDQ, LNST…DPTL, EGFS…SVNM, NGQT…SLSV, HQNT…SLDI, and KGET…KMRA. A helical membrane pass occupies residues 292 to 312; the sequence is LFLLLILSMITLWAVGYILDF. Residues 313–320 lie on the Lumenal side of the membrane; the sequence is NSDSWLLK. A helical transmembrane segment spans residues 321-341; that stretch reads GCLLVALFFLTSLFPRFLVGY. Over 342 to 347 the chain is Cytoplasmic; the sequence is KNLVYL. Residues 348 to 368 form a helical membrane-spanning segment; that stretch reads PTVFLLSSIFWIFMTWFILFF. The Lumenal segment spans residues 369–371; sequence PDT. The helical transmembrane segment at 372–392 threads the bilayer; it reads AGSPLYFAFIFSIMAFLYFFY. At 393-470 the chain is on the cytoplasmic side; sequence KTWATDPGFT…RCIGFGNHHH (78 aa). The 51-residue stretch at 426–476 folds into the DHHC domain; the sequence is TFCTSCLIRKPLRSLHCHVCNSCVARFDQHCFWTGRCIGFGNHHHYIFFLL. The active-site S-palmitoyl cysteine intermediate is Cys456. The helical transmembrane segment at 471–491 threads the bilayer; the sequence is YIFFLLSLSMVCDWIIYGSFV. Topologically, residues 492–518 are lumenal; that stretch reads YWSNHCATTFKEDGLWTYLNQIVACSP. The helical transmembrane segment at 519–539 threads the bilayer; that stretch reads WVLYIFMLAAFHFSWSTFLLI. The Cytoplasmic segment spans residues 540–622; it reads NQLFQIAFLG…PAKEKVLRSV (83 aa).

It belongs to the DHHC palmitoyltransferase family. AKR/ZDHHC17 subfamily. Interacts (via ANK repeats) with CLIP3. Interacts (via ANK repeats) with DNAJC5 (via C-terminus). Interacts (via ANK repeats) with HTT. Interacts (via ANK repeats) with MAP6. Interacts (via ANK repeats) with SNAP23. Interacts (via ANK repeats) with SNAP25. May interact (via ANK repeats) with SPRED2. Expressed in most adult tissues, but at low levels in the liver, skin, and lung.

The protein resides in the golgi apparatus membrane. The protein localises to the cytoplasmic vesicle membrane. It catalyses the reaction L-cysteinyl-[protein] + hexadecanoyl-CoA = S-hexadecanoyl-L-cysteinyl-[protein] + CoA. In terms of biological role, palmitoyltransferase that could catalyze the addition of palmitate onto various protein substrates. Palmitoyltransferase for HTT and GAD2. May play a role in Mg(2+) transport. The polypeptide is Palmitoyltransferase ZDHHC13 (Mus musculus (Mouse)).